We begin with the raw amino-acid sequence, 103 residues long: DNA-binding protein TRF1 (103 aa).

In terms of biological role, DNA-binding protein that recognizes the inverted terminal repeats of the pGKl linear DNA plasmids. The protein is DNA-binding protein TRF1 (TRF1) of Kluyveromyces lactis (strain ATCC 8585 / CBS 2359 / DSM 70799 / NBRC 1267 / NRRL Y-1140 / WM37) (Yeast).